The primary structure comprises 1269 residues: ATP-dependent helicase/nuclease subunit A (1269 aa).

Residues 17–492 (GGWTAEQLEA…LALTANFRSR (476 aa)) enclose the UvrD-like helicase ATP-binding domain. ATP is bound at residue 38–45 (ASAGTGKT). The UvrD-like helicase C-terminal domain occupies 541 to 838 (AVELHLVERG…RIMSIHKSKG (298 aa)).

Belongs to the helicase family. AddA subfamily. As to quaternary structure, heterodimer of AddA and AddB/RexB. Mg(2+) is required as a cofactor.

It carries out the reaction Couples ATP hydrolysis with the unwinding of duplex DNA by translocating in the 3'-5' direction.. The enzyme catalyses ATP + H2O = ADP + phosphate + H(+). In terms of biological role, the heterodimer acts as both an ATP-dependent DNA helicase and an ATP-dependent, dual-direction single-stranded exonuclease. Recognizes the chi site generating a DNA molecule suitable for the initiation of homologous recombination. The AddA nuclease domain is required for chi fragment generation; this subunit has the helicase and 3' -&gt; 5' nuclease activities. The sequence is that of ATP-dependent helicase/nuclease subunit A from Pelotomaculum thermopropionicum (strain DSM 13744 / JCM 10971 / SI).